The chain runs to 701 residues: Polyribonucleotide nucleotidyltransferase (701 aa).

2 residues coordinate Mg(2+): Asp487 and Asp493. Residues 554–613 form the KH domain; that stretch reads PTMIAMKIDTDKIRDVIGKGGATIRAICEETKASIDIEDDGSIKIFGETKEAAEAAKQRI. One can recognise an S1 motif domain in the interval 623–691; the sequence is GKIYVGKVER…NRGRIKLSIK (69 aa).

Belongs to the polyribonucleotide nucleotidyltransferase family. Component of the RNA degradosome, which is a multiprotein complex involved in RNA processing and mRNA degradation. Requires Mg(2+) as cofactor.

It is found in the cytoplasm. The catalysed reaction is RNA(n+1) + phosphate = RNA(n) + a ribonucleoside 5'-diphosphate. Involved in mRNA degradation. Catalyzes the phosphorolysis of single-stranded polyribonucleotides processively in the 3'- to 5'-direction. The protein is Polyribonucleotide nucleotidyltransferase of Pseudomonas putida (strain GB-1).